Here is an 86-residue protein sequence, read N- to C-terminus: Long neurotoxin homolog (86 aa).

The first 21 residues, 1–21, serve as a signal peptide directing secretion; it reads MKTLLLTLVVVTIVCLALGYT. Intrachain disulfides connect C24/C45, C27/C32, C38/C63, C67/C78, and C79/C84.

Belongs to the three-finger toxin family. Ancestral subfamily. Orphan group II sub-subfamily. In terms of tissue distribution, expressed by the venom gland.

Its subcellular location is the secreted. Binds with low affinity and weakly inhibits muscle nicotinic acetylcholine receptor (nAChR). This is Long neurotoxin homolog from Naja atra (Chinese cobra).